Consider the following 556-residue polypeptide: Arginine--tRNA ligase (556 aa).

The 'HIGH' region motif lies at 132 to 142 (ANPTGDLHLGH).

The protein belongs to the class-I aminoacyl-tRNA synthetase family. In terms of assembly, monomer.

The protein resides in the cytoplasm. It catalyses the reaction tRNA(Arg) + L-arginine + ATP = L-arginyl-tRNA(Arg) + AMP + diphosphate. The protein is Arginine--tRNA ligase of Listeria monocytogenes serovar 1/2a (strain ATCC BAA-679 / EGD-e).